The sequence spans 1381 residues: DNA-directed RNA polymerase subunit beta' (1381 aa).

Residues cysteine 70, cysteine 72, cysteine 85, and cysteine 88 each coordinate Zn(2+). Residues aspartate 461, aspartate 463, and aspartate 465 each contribute to the Mg(2+) site. Cysteine 801, cysteine 875, cysteine 882, and cysteine 885 together coordinate Zn(2+). The segment at 1362–1381 (VEIEGDENSNKKSLDMHAAN) is disordered. Residues 1369-1381 (NSNKKSLDMHAAN) show a composition bias toward basic and acidic residues.

The protein belongs to the RNA polymerase beta' chain family. In terms of assembly, the RNAP catalytic core consists of 2 alpha, 1 beta, 1 beta' and 1 omega subunit. When a sigma factor is associated with the core the holoenzyme is formed, which can initiate transcription. The cofactor is Mg(2+). It depends on Zn(2+) as a cofactor.

The catalysed reaction is RNA(n) + a ribonucleoside 5'-triphosphate = RNA(n+1) + diphosphate. Its function is as follows. DNA-dependent RNA polymerase catalyzes the transcription of DNA into RNA using the four ribonucleoside triphosphates as substrates. The protein is DNA-directed RNA polymerase subunit beta' of Syntrophus aciditrophicus (strain SB).